The sequence spans 248 residues: 3-deoxy-manno-octulosonate cytidylyltransferase (248 aa).

It belongs to the KdsB family.

Its subcellular location is the cytoplasm. The enzyme catalyses 3-deoxy-alpha-D-manno-oct-2-ulosonate + CTP = CMP-3-deoxy-beta-D-manno-octulosonate + diphosphate. It functions in the pathway nucleotide-sugar biosynthesis; CMP-3-deoxy-D-manno-octulosonate biosynthesis; CMP-3-deoxy-D-manno-octulosonate from 3-deoxy-D-manno-octulosonate and CTP: step 1/1. It participates in bacterial outer membrane biogenesis; lipopolysaccharide biosynthesis. Its function is as follows. Activates KDO (a required 8-carbon sugar) for incorporation into bacterial lipopolysaccharide in Gram-negative bacteria. The polypeptide is 3-deoxy-manno-octulosonate cytidylyltransferase (Leptospira interrogans serogroup Icterohaemorrhagiae serovar copenhageni (strain Fiocruz L1-130)).